The chain runs to 83 residues: MNFSFSSYPYYNMIKHIANMKRFSLWFTHITFIGLFLMFQLIKDYFSSEGQALINTIFVVTCIIAILLWIIYCVFLKLRNKSH.

The next 2 helical transmembrane spans lie at 23–43 (FSLWFTHITFIGLFLMFQLIK) and 56–76 (TIFVVTCIIAILLWIIYCVFL).

It is found in the cell membrane. This is an uncharacterized protein from Bacillus subtilis (strain 168).